An 893-amino-acid polypeptide reads, in one-letter code: UPF0182 protein CLD_0809 (893 aa).

The next 7 membrane-spanning stretches (helical) occupy residues 9–29 (IPLFIIILFIAFFNKIINFII), 49–69 (AIIILMIPIFIIFFISIWMYY), 94–114 (LFFIFNFIVSIFLAYIFSSSY), 154–174 (VIISLLLFLVITTFIAYFILE), 202–222 (LAIVSGLIILFISFGHLIKIW), 246–266 (FYKIIVVITLISSIVTLLSIV), and 273–293 (VSICIGITIFLIVSQNIASFL).

The protein belongs to the UPF0182 family.

Its subcellular location is the cell membrane. This Clostridium botulinum (strain Okra / Type B1) protein is UPF0182 protein CLD_0809.